A 171-amino-acid polypeptide reads, in one-letter code: Neuronal vesicle trafficking-associated protein 2 (171 aa).

The tract at residues 1-21 (MVKLNSNPGEKGAKPPSVEDG) is disordered. The Cytoplasmic portion of the chain corresponds to 1 to 71 (MVKLNSNPGE…FRVPKIAEFT (71 aa)). The helical; Signal-anchor for type II membrane protein transmembrane segment at 72–92 (VTILVSLALAFLACIVFLVVY) threads the bilayer. Over 93-171 (KAFTYDHSCP…EPKPPKTQGH (79 aa)) the chain is Lumenal.

The protein belongs to the NSG family. As to expression, specifically expressed in neural and neuroendocrine tissues. Pituitary and less in adrenal gland and testis. Expressed in the hippocampus throughout development. Remains enriched in layer V cortical neurons during development. At P0, broadly expressed in the neocortex. Is down-regulated overall at P8 and P14, but remains relatively enriched in layer V. At P0 is lower expressed in the cerebellum. Expression remains low throughout development, and is undetectable by adulthood.

It localises to the membrane. The protein resides in the golgi apparatus. Its subcellular location is the trans-Golgi network membrane. The protein localises to the cell projection. It is found in the dendrite. It localises to the endosome membrane. The protein resides in the early endosome membrane. Its subcellular location is the late endosome membrane. The protein localises to the lysosome lumen. It is found in the cytoplasmic vesicle membrane. It localises to the golgi stack membrane. The protein resides in the endosome. Its subcellular location is the multivesicular body membrane. This chain is Neuronal vesicle trafficking-associated protein 2, found in Mus musculus (Mouse).